Consider the following 51-residue polypeptide: Ribosome biogenesis protein Nop10 (51 aa).

The protein belongs to the NOP10 family.

In terms of biological role, involved in ribosome biogenesis; more specifically in 18S rRNA pseudouridylation and in cleavage of pre-rRNA. This chain is Ribosome biogenesis protein Nop10, found in Nitrosopumilus maritimus (strain SCM1).